We begin with the raw amino-acid sequence, 413 residues long: GDP-mannose-dependent alpha-mannosyltransferase (413 aa).

It belongs to the glycosyltransferase group 1 family.

Its pathway is phospholipid metabolism; phosphatidylinositol metabolism. Functionally, catalyzes the addition of a mannose residue from GDP-D-mannose to GlcAGroAc2 to generate 1,2-di-O-C16/C18:1-(alpha-D-mannopyranosyl)-(1-4)-(alpha-D-glucopyranosyluronic acid)-(1-3)-glycerol(ManGlcAGroAc2). The sequence is that of GDP-mannose-dependent alpha-mannosyltransferase (mgtA) from Corynebacterium glutamicum (strain ATCC 13032 / DSM 20300 / JCM 1318 / BCRC 11384 / CCUG 27702 / LMG 3730 / NBRC 12168 / NCIMB 10025 / NRRL B-2784 / 534).